We begin with the raw amino-acid sequence, 392 residues long: Protein FAM53C (392 aa).

Met1 carries the N-acetylmethionine modification. Positions 77–120 (HLRPPSRGSSPKEQPLSQVLRPEPPDPEKLPVPPAPPSKRHCRS) are disordered. Polar residues predominate over residues 83–93 (RGSSPKEQPLS). Ser122 and Ser162 each carry phosphoserine. 3 disordered regions span residues 141 to 167 (LWTP…PKRV), 203 to 303 (SRPC…LDFD), and 340 to 364 (SASC…EGAV). Over residues 203 to 215 (SRPCATSPQSGSW) the composition is skewed to polar residues. 5 positions are modified to phosphoserine: Ser232, Ser234, Ser255, Ser273, and Ser299. Over residues 241-256 (ASRFLPSARSSPASSP) the composition is skewed to low complexity. Residues 278-303 (LDARKTGVKRRHEEDPRRLRPSLDFD) are compositionally biased toward basic and acidic residues.

The protein belongs to the FAM53 family.

This chain is Protein FAM53C, found in Pongo abelii (Sumatran orangutan).